The following is a 174-amino-acid chain: RNA pyrophosphohydrolase (174 aa).

In terms of domain architecture, Nudix hydrolase spans 6-149 (GFRANVGIII…KRDVYRKVMK (144 aa)). The Nudix box signature appears at 38-59 (GGVDDGESAEEAMYRELYEEVG).

The protein belongs to the Nudix hydrolase family. RppH subfamily. The cofactor is a divalent metal cation.

In terms of biological role, accelerates the degradation of transcripts by removing pyrophosphate from the 5'-end of triphosphorylated RNA, leading to a more labile monophosphorylated state that can stimulate subsequent ribonuclease cleavage. The polypeptide is RNA pyrophosphohydrolase (Shewanella sp. (strain W3-18-1)).